We begin with the raw amino-acid sequence, 306 residues long: High osmolarity signaling protein MOS1 (306 aa).

Residues 1-23 (MEHSRPYGGRKRMSLGNILGDPF) lie on the Cytoplasmic side of the membrane. Residues 24 to 44 (ALATISISLLAWFITFISCVI) traverse the membrane as a helical segment. At 45 to 67 (AQVQANKNKGLPDKDNPDGNFPP) the chain is on the extracellular side. The chain crosses the membrane as a helical span at residues 68–88 (FAWWAVVYSLFLIVGVVIVVA). Residues 89–96 (SDAIQTYH) are Cytoplasmic-facing. The chain crosses the membrane as a helical span at residues 97 to 117 (VAVTGYLAGGMVLVTSGVNSL). Topologically, residues 118 to 126 (VYSKNGARE) are extracellular. The helical transmembrane segment at 127-147 (AAAAGFILLSMVVIVWIFYFG) threads the bilayer. The Cytoplasmic portion of the chain corresponds to 148–306 (STPSSTPRAF…IAPSNYLILL (159 aa)). The interval 204–242 (FENPSPVGGASQAPTAPTMPTYGNNTMQPNNKSNDEEVL) is disordered. The span at 224–235 (TYGNNTMQPNNK) shows a compositional bias: polar residues. The SH3 domain maps to 246-306 (DYPYQAKAIY…IAPSNYLILL (61 aa)).

The protein belongs to the SHO1 family. As to quaternary structure, forms homooligomers.

The protein resides in the cell membrane. Plasma membrane osmosensor that activates the high osmolarity glycerol (HOG) MAPK signaling pathway in response to high osmolarity. Affects fungal virulence. This is High osmolarity signaling protein MOS1 (MOS1) from Metarhizium robertsii (strain ARSEF 23 / ATCC MYA-3075) (Metarhizium anisopliae (strain ARSEF 23)).